Consider the following 95-residue polypeptide: CRISPR-associated endoribonuclease Cas2 3 (95 aa).

Aspartate 7 is a Mg(2+) binding site.

This sequence belongs to the CRISPR-associated endoribonuclease Cas2 protein family. Homodimer, forms a heterotetramer with a Cas1 homodimer. Mg(2+) serves as cofactor.

CRISPR (clustered regularly interspaced short palindromic repeat), is an adaptive immune system that provides protection against mobile genetic elements (viruses, transposable elements and conjugative plasmids). CRISPR clusters contain sequences complementary to antecedent mobile elements and target invading nucleic acids. CRISPR clusters are transcribed and processed into CRISPR RNA (crRNA). Functions as a ssRNA-specific endoribonuclease. Involved in the integration of spacer DNA into the CRISPR cassette. This Rhodospirillum rubrum (strain ATCC 11170 / ATH 1.1.1 / DSM 467 / LMG 4362 / NCIMB 8255 / S1) protein is CRISPR-associated endoribonuclease Cas2 3.